Here is a 311-residue protein sequence, read N- to C-terminus: Giardin subunit gamma (311 aa).

A coiled-coil region spans residues Gly185 to Val233.

As to quaternary structure, interacts with EB1.

It localises to the cytoplasm. The protein resides in the cytoskeleton. Functionally, giardins are involved in parasite attachment to the intestinal mucosa and in the cytoskeletal disassembly and reassembly that marks the transition from infectious trophozoite to transmissible cyst. They may interact with other cytoskeletal proteins such as microtubules in the microribbons or crossbridges, to maintain the integrity of the ventral disk. Involved in formation of the ventral disk. This is Giardin subunit gamma from Giardia intestinalis (Giardia lamblia).